A 394-amino-acid chain; its full sequence is Elongation factor Tu (394 aa).

In terms of domain architecture, tr-type G spans 10–205 (KPHMNVGTIG…TMDSYFDLPE (196 aa)). The G1 stretch occupies residues 19–26 (GHVDHGKT). 19 to 26 (GHVDHGKT) provides a ligand contact to GTP. Threonine 26 provides a ligand contact to Mg(2+). The G2 stretch occupies residues 61–65 (GITIN). Positions 82-85 (DCPG) are G3. GTP is bound by residues 82–86 (DCPGH) and 137–140 (NKLD). The interval 137–140 (NKLD) is G4. The segment at 173-175 (SAF) is G5.

It belongs to the TRAFAC class translation factor GTPase superfamily. Classic translation factor GTPase family. EF-Tu/EF-1A subfamily. As to quaternary structure, monomer.

Its subcellular location is the cytoplasm. The enzyme catalyses GTP + H2O = GDP + phosphate + H(+). Functionally, GTP hydrolase that promotes the GTP-dependent binding of aminoacyl-tRNA to the A-site of ribosomes during protein biosynthesis. This is Elongation factor Tu from Borrelia hermsii (strain HS1 / DAH).